Here is a 1876-residue protein sequence, read N- to C-terminus: Vitellogenin-2 (1876 aa).

A signal peptide spans 1–16; the sequence is MMWKTLLCCLLAVSAA. Positions 21 to 838 constitute a Vitellogenin domain; it reads WEPGKRYEYH…SRDSFMPKSV (818 aa). 2 N-linked (GlcNAc...) asparagine glycosylation sites follow: N211 and N290. The disordered stretch occupies residues 322 to 424; it reads TGEPSQRDSA…SSSSSSEEYL (103 aa). Low complexity-rich tracts occupy residues 330–368 and 387–404; these read SAYALESNSDSSSSSSSSSSEENAANSRHRSSSSSSSSR and SQPRNSRSRRSLQNSKRS. A glycan (N-linked (GlcNAc...) asparagine) is linked at N409. Positions 411-420 are enriched in low complexity; the sequence is SSSSSSSSSS. N-linked (GlcNAc...) asparagine glycosylation is found at N595, N631, N932, N1012, and N1055. The disordered stretch occupies residues 1192–1239; it reads SYDNRYTQPEEEEETRQHSKIRRPRSASRKHRRSRHEERAPLENLEVS. Residues 1209 to 1225 show a composition bias toward basic residues; that stretch reads HSKIRRPRSASRKHRRS. N-linked (GlcNAc...) asparagine glycans are attached at residues N1318, N1398, N1417, N1424, N1469, N1532, N1636, N1719, N1760, and N1770. The VWFD domain maps to 1518–1703; sequence PTCVVDYSKV…TLVRDLDRSR (186 aa). The cysteines at positions 1520 and 1664 are disulfide-linked. Positions 1729–1788 are disordered; that stretch reads SGIRPYDIDDDSSSSSSSSSSSSSSSSSSKSNSTSSSSSESNESALPRGENKLHRAQQPS. The span at 1741–1772 shows a compositional bias: low complexity; the sequence is SSSSSSSSSSSSSSSSSKSNSTSSSSSESNES.

Its subcellular location is the secreted. Its function is as follows. Precursor of the egg-yolk proteins that are sources of nutrients during embryonic development. The chain is Vitellogenin-2 (VG2) from Periplaneta americana (American cockroach).